The chain runs to 42 residues: Packaging protein P20 (42 aa).

A helical membrane pass occupies residues 11 to 31 (INWLIVILMLTIAGMAATLVC).

As to quaternary structure, heterodimer of P20 and P22; further multimerizes as hexamers of heterodimers. Part of the dodecameric portal complex that is composed of the packaging efficiency factor P6, the DNA packaging ATPase P9, and the internal heterododecamer P20/P22 which spans the virion inner membrane.

Its subcellular location is the virion membrane. Its function is as follows. Together with P22, forms the internal part of the portal complex embeded in the virion internal membrane and which plays critical roles in genome packaging and genome ejection. Both proteins multimerize as a single ring-shaped heterdodecamer arranged around a central channel and interact with the P6/P9 external part of the portal. This chain is Packaging protein P20 (XX), found in Acinetobacter calcoaceticus (Arthrobacter siderocapsulatus).